Reading from the N-terminus, the 374-residue chain is Heptahelical transmembrane protein 5 (374 aa).

Residues 1–79 (MGDEAEIKEH…LSIFTIHNET (79 aa)) lie on the Cytoplasmic side of the membrane. The helical transmembrane segment at 80–100 (LNVWTHLIGFFLFLALTIYTA) threads the bilayer. The Extracellular portion of the chain corresponds to 101–191 (TKVPSVVDLH…LIFRPITRWP (91 aa)). Residues 192-212 (FYAFLGGAIFCLLASSTCHLL) traverse the membrane as a helical segment. Topologically, residues 213-228 (SCHSERVSYIMLRLDY) are cytoplasmic. A helical membrane pass occupies residues 229-249 (AGIAALIATSFYPPVYYSFMC). The Extracellular segment spans residues 250–256 (DPFFCNL). A helical membrane pass occupies residues 257–277 (YLGFITILGIATVLVSLLPVF). Topologically, residues 278-288 (QSLEFRVVRAS) are cytoplasmic. Residues 289 to 309 (LFFGMGFSGLAPILHKLIIFW) traverse the membrane as a helical segment. Residues 310–313 (DQPE) are Extracellular-facing. Residues 314–334 (ALHMTGYEILMGLLYGLGAVV) form a helical membrane-spanning segment. Topologically, residues 335–347 (YATRIPERWMPGK) are cytoplasmic. The chain crosses the membrane as a helical span at residues 348–368 (FDIAGHSHQLFHVLVVAGALT). The Extracellular segment spans residues 369–374 (HYRAGL).

Belongs to the ADIPOR family. In terms of tissue distribution, expressed in roots, leaves, stems and flowers.

Its subcellular location is the membrane. May play a role in abiotic stress response. The polypeptide is Heptahelical transmembrane protein 5 (HHP5) (Arabidopsis thaliana (Mouse-ear cress)).